A 117-amino-acid chain; its full sequence is NADH-ubiquinone oxidoreductase chain 3 (117 aa).

Transmembrane regions (helical) follow at residues 4–24 (IIFI…LASI), 60–80 (ITII…MIII), and 86–106 (IMIW…GLYH).

This sequence belongs to the complex I subunit 3 family.

The protein localises to the mitochondrion membrane. The catalysed reaction is a ubiquinone + NADH + 5 H(+)(in) = a ubiquinol + NAD(+) + 4 H(+)(out). Functionally, core subunit of the mitochondrial membrane respiratory chain NADH dehydrogenase (Complex I) that is believed to belong to the minimal assembly required for catalysis. Complex I functions in the transfer of electrons from NADH to the respiratory chain. The immediate electron acceptor for the enzyme is believed to be ubiquinone. This is NADH-ubiquinone oxidoreductase chain 3 (mt:ND3) from Drosophila melanogaster (Fruit fly).